Reading from the N-terminus, the 320-residue chain is ATP-dependent 6-phosphofructokinase (320 aa).

Glycine 12 contacts ATP. ADP-binding positions include 22-26 and 55-60; these read RGVVR and RYSVSD. ATP is bound by residues 73–74 and 103–106; these read RF and GDGS. Aspartate 104 is a Mg(2+) binding site. 126–128 is a substrate binding site; sequence TID. Aspartate 128 (proton acceptor) is an active-site residue. Position 155 (arginine 155) interacts with ADP. Substrate-binding positions include arginine 163 and 170-172; that span reads MGR. ADP-binding positions include 186 to 188, lysine 212, and 214 to 216; these read GCE and KKH. Residues glutamate 223, arginine 244, and 250–253 each bind substrate; that span reads HIQR.

The protein belongs to the phosphofructokinase type A (PFKA) family. ATP-dependent PFK group I subfamily. Prokaryotic clade 'B1' sub-subfamily. As to quaternary structure, homotetramer. Mg(2+) serves as cofactor.

It is found in the cytoplasm. The catalysed reaction is beta-D-fructose 6-phosphate + ATP = beta-D-fructose 1,6-bisphosphate + ADP + H(+). It functions in the pathway carbohydrate degradation; glycolysis; D-glyceraldehyde 3-phosphate and glycerone phosphate from D-glucose: step 3/4. With respect to regulation, allosterically activated by ADP and other diphosphonucleosides, and allosterically inhibited by phosphoenolpyruvate. Catalyzes the phosphorylation of D-fructose 6-phosphate to fructose 1,6-bisphosphate by ATP, the first committing step of glycolysis. The sequence is that of ATP-dependent 6-phosphofructokinase from Sodalis glossinidius (strain morsitans).